The primary structure comprises 249 residues: Segregation and condensation protein A (249 aa).

Belongs to the ScpA family. As to quaternary structure, component of a cohesin-like complex composed of ScpA, ScpB and the Smc homodimer, in which ScpA and ScpB bind to the head domain of Smc. The presence of the three proteins is required for the association of the complex with DNA.

Its subcellular location is the cytoplasm. Its function is as follows. Participates in chromosomal partition during cell division. May act via the formation of a condensin-like complex containing Smc and ScpB that pull DNA away from mid-cell into both cell halves. The protein is Segregation and condensation protein A of Clostridium acetobutylicum (strain ATCC 824 / DSM 792 / JCM 1419 / IAM 19013 / LMG 5710 / NBRC 13948 / NRRL B-527 / VKM B-1787 / 2291 / W).